A 210-amino-acid polypeptide reads, in one-letter code: Molybdenum cofactor guanylyltransferase (210 aa).

Residues 9–11, lysine 21, aspartate 66, and aspartate 95 contribute to the GTP site; that span reads LAG. A Mg(2+)-binding site is contributed by aspartate 95.

Belongs to the MobA family. Monomer. It depends on Mg(2+) as a cofactor.

The protein localises to the cytoplasm. It carries out the reaction Mo-molybdopterin + GTP + H(+) = Mo-molybdopterin guanine dinucleotide + diphosphate. Its function is as follows. Transfers a GMP moiety from GTP to Mo-molybdopterin (Mo-MPT) cofactor (Moco or molybdenum cofactor) to form Mo-molybdopterin guanine dinucleotide (Mo-MGD) cofactor. In Syntrophotalea carbinolica (strain DSM 2380 / NBRC 103641 / GraBd1) (Pelobacter carbinolicus), this protein is Molybdenum cofactor guanylyltransferase.